We begin with the raw amino-acid sequence, 373 residues long: Dual-specificity RNA methyltransferase RlmN (373 aa).

Glu-94 acts as the Proton acceptor in catalysis. The Radical SAM core domain maps to 100–339; that stretch reads EDDRATLCVS…VIVRKTRGDD (240 aa). Cys-107 and Cys-344 are joined by a disulfide. [4Fe-4S] cluster contacts are provided by Cys-114, Cys-118, and Cys-121. S-adenosyl-L-methionine contacts are provided by residues 168-169, Ser-200, 222-224, and Asn-301; these read GE and SIH. Residue Cys-344 is the S-methylcysteine intermediate of the active site.

This sequence belongs to the radical SAM superfamily. RlmN family. It depends on [4Fe-4S] cluster as a cofactor.

It is found in the cytoplasm. The catalysed reaction is adenosine(2503) in 23S rRNA + 2 reduced [2Fe-2S]-[ferredoxin] + 2 S-adenosyl-L-methionine = 2-methyladenosine(2503) in 23S rRNA + 5'-deoxyadenosine + L-methionine + 2 oxidized [2Fe-2S]-[ferredoxin] + S-adenosyl-L-homocysteine. It carries out the reaction adenosine(37) in tRNA + 2 reduced [2Fe-2S]-[ferredoxin] + 2 S-adenosyl-L-methionine = 2-methyladenosine(37) in tRNA + 5'-deoxyadenosine + L-methionine + 2 oxidized [2Fe-2S]-[ferredoxin] + S-adenosyl-L-homocysteine. Functionally, specifically methylates position 2 of adenine 2503 in 23S rRNA and position 2 of adenine 37 in tRNAs. m2A2503 modification seems to play a crucial role in the proofreading step occurring at the peptidyl transferase center and thus would serve to optimize ribosomal fidelity. The protein is Dual-specificity RNA methyltransferase RlmN of Shewanella baltica (strain OS155 / ATCC BAA-1091).